Consider the following 929-residue polypeptide: Bifunctional glutamine synthetase adenylyltransferase/adenylyl-removing enzyme (929 aa).

Positions 1–422 (MTTPISTSRA…TRHFEQIFAV (422 aa)) are adenylyl removase. The tract at residues 429-929 (LGTFARIRPE…FQLWEDVFGT (501 aa)) is adenylyl transferase.

Belongs to the GlnE family. It depends on Mg(2+) as a cofactor.

It catalyses the reaction [glutamine synthetase]-O(4)-(5'-adenylyl)-L-tyrosine + phosphate = [glutamine synthetase]-L-tyrosine + ADP. The enzyme catalyses [glutamine synthetase]-L-tyrosine + ATP = [glutamine synthetase]-O(4)-(5'-adenylyl)-L-tyrosine + diphosphate. Its function is as follows. Involved in the regulation of glutamine synthetase GlnA, a key enzyme in the process to assimilate ammonia. When cellular nitrogen levels are high, the C-terminal adenylyl transferase (AT) inactivates GlnA by covalent transfer of an adenylyl group from ATP to specific tyrosine residue of GlnA, thus reducing its activity. Conversely, when nitrogen levels are low, the N-terminal adenylyl removase (AR) activates GlnA by removing the adenylyl group by phosphorolysis, increasing its activity. The regulatory region of GlnE binds the signal transduction protein PII (GlnB) which indicates the nitrogen status of the cell. The protein is Bifunctional glutamine synthetase adenylyltransferase/adenylyl-removing enzyme of Nitrosomonas eutropha (strain DSM 101675 / C91 / Nm57).